The chain runs to 462 residues: Argininosuccinate lyase (462 aa).

It belongs to the lyase 1 family. Argininosuccinate lyase subfamily.

The protein localises to the cytoplasm. The catalysed reaction is 2-(N(omega)-L-arginino)succinate = fumarate + L-arginine. The protein operates within amino-acid biosynthesis; L-arginine biosynthesis; L-arginine from L-ornithine and carbamoyl phosphate: step 3/3. This is Argininosuccinate lyase from Caldicellulosiruptor bescii (strain ATCC BAA-1888 / DSM 6725 / KCTC 15123 / Z-1320) (Anaerocellum thermophilum).